The sequence spans 476 residues: Serine/threonine-protein kinase WAG1 (476 aa).

The Protein kinase domain maps to 93–400 (FKLVRHLGTG…AQDIKRHEFF (308 aa)). Residues 99-107 (LGTGNLGRV) and Lys124 each bind ATP. The Proton acceptor role is filled by Asp219.

This sequence belongs to the protein kinase superfamily. Ser/Thr protein kinase family. As to expression, expressed in root tips and lateral root primordia.

It localises to the cytoplasm. The protein localises to the cytosol. The catalysed reaction is L-seryl-[protein] + ATP = O-phospho-L-seryl-[protein] + ADP + H(+). The enzyme catalyses L-threonyl-[protein] + ATP = O-phospho-L-threonyl-[protein] + ADP + H(+). Its function is as follows. Serine/threonine-protein kinase involved in the regulation of auxin signaling. Acts as a positive regulator of cellular auxin efflux and regulates organ development by enhancing PIN-mediated polar auxin transport. Phosphorylates conserved serine residues in the PIN auxin efflux carriers. Phosphorylation of PIN proteins is required and sufficient for apical-basal PIN polarity that enables directional intercellular auxin fluxes, which mediate differential growth, tissue patterning and organogenesis. Acts as a suppressor of root waving. The polypeptide is Serine/threonine-protein kinase WAG1 (WAG1) (Arabidopsis thaliana (Mouse-ear cress)).